Consider the following 172-residue polypeptide: uncharacterized protein (172 aa).

A run of 3 helical transmembrane segments spans residues 16–36 (IMIVIAIIITIGSFLFIAYLI), 68–88 (SFLIISLLCFYFGMLYIAGEL), and 89–109 (VISHILFIAICWIVVFLYIII).

Its subcellular location is the cell membrane. This is an uncharacterized protein from Methanocaldococcus jannaschii (strain ATCC 43067 / DSM 2661 / JAL-1 / JCM 10045 / NBRC 100440) (Methanococcus jannaschii).